The primary structure comprises 276 residues: S-adenosylmethionine decarboxylase proenzyme (276 aa).

The active-site Schiff-base intermediate with substrate; via pyruvic acid is the Ser-124. Position 124 is a pyruvic acid (Ser); by autocatalysis (Ser-124). The active-site Proton acceptor; for processing activity is the His-129. Cys-152 (proton donor; for catalytic activity) is an active-site residue.

It belongs to the prokaryotic AdoMetDC family. Type 2 subfamily. In terms of assembly, heterooctamer of four alpha and four beta chains arranged as a tetramer of alpha/beta heterodimers. Pyruvate is required as a cofactor. Post-translationally, is synthesized initially as an inactive proenzyme. Formation of the active enzyme involves a self-maturation process in which the active site pyruvoyl group is generated from an internal serine residue via an autocatalytic post-translational modification. Two non-identical subunits are generated from the proenzyme in this reaction, and the pyruvate is formed at the N-terminus of the alpha chain, which is derived from the carboxyl end of the proenzyme. The post-translation cleavage follows an unusual pathway, termed non-hydrolytic serinolysis, in which the side chain hydroxyl group of the serine supplies its oxygen atom to form the C-terminus of the beta chain, while the remainder of the serine residue undergoes an oxidative deamination to produce ammonia and the pyruvoyl group blocking the N-terminus of the alpha chain.

It carries out the reaction S-adenosyl-L-methionine + H(+) = S-adenosyl 3-(methylsulfanyl)propylamine + CO2. Its pathway is amine and polyamine biosynthesis; S-adenosylmethioninamine biosynthesis; S-adenosylmethioninamine from S-adenosyl-L-methionine: step 1/1. Its function is as follows. Catalyzes the decarboxylation of S-adenosylmethionine to S-adenosylmethioninamine (dcAdoMet), the propylamine donor required for the synthesis of the polyamines spermine and spermidine from the diamine putrescine. This is S-adenosylmethionine decarboxylase proenzyme from Desulfitobacterium hafniense (strain DSM 10664 / DCB-2).